The primary structure comprises 187 residues: Peptidyl-tRNA hydrolase (187 aa).

Tyr18 is a binding site for tRNA. The Proton acceptor role is filled by His23. The tRNA site is built by Phe65, Asn67, and Asn113.

This sequence belongs to the PTH family. Monomer.

The protein resides in the cytoplasm. It carries out the reaction an N-acyl-L-alpha-aminoacyl-tRNA + H2O = an N-acyl-L-amino acid + a tRNA + H(+). In terms of biological role, hydrolyzes ribosome-free peptidyl-tRNAs (with 1 or more amino acids incorporated), which drop off the ribosome during protein synthesis, or as a result of ribosome stalling. Functionally, catalyzes the release of premature peptidyl moieties from peptidyl-tRNA molecules trapped in stalled 50S ribosomal subunits, and thus maintains levels of free tRNAs and 50S ribosomes. The polypeptide is Peptidyl-tRNA hydrolase (Coxiella burnetii (strain CbuG_Q212) (Coxiella burnetii (strain Q212))).